Here is a 337-residue protein sequence, read N- to C-terminus: Phosphate acyltransferase (337 aa).

The protein belongs to the PlsX family. As to quaternary structure, homodimer. Probably interacts with PlsY.

It localises to the cytoplasm. The catalysed reaction is a fatty acyl-[ACP] + phosphate = an acyl phosphate + holo-[ACP]. Its pathway is lipid metabolism; phospholipid metabolism. Functionally, catalyzes the reversible formation of acyl-phosphate (acyl-PO(4)) from acyl-[acyl-carrier-protein] (acyl-ACP). This enzyme utilizes acyl-ACP as fatty acyl donor, but not acyl-CoA. This Halalkalibacterium halodurans (strain ATCC BAA-125 / DSM 18197 / FERM 7344 / JCM 9153 / C-125) (Bacillus halodurans) protein is Phosphate acyltransferase.